A 465-amino-acid chain; its full sequence is uncharacterized protein (465 aa).

Residues 1–15 show a composition bias toward basic and acidic residues; that stretch reads MEKNYIFENSIYKDE. Disordered stretches follow at residues 1–31 and 288–320; these read MEKN…NNSS and QLEK…EQLP.

This is an uncharacterized protein from Dictyostelium discoideum (Social amoeba).